A 179-amino-acid polypeptide reads, in one-letter code: Interleukin-22 (179 aa).

The signal sequence occupies residues 1–33 (MAVLQKSMSFSLMGTLAASCLLLIALWAQEANA). Disulfide bonds link C40–C132 and C89–C178. 3 N-linked (GlcNAc...) asparagine glycosylation sites follow: N54, N68, and N97.

The protein belongs to the IL-10 family.

It is found in the secreted. Functionally, cytokine that plays a critical role in modulating tissue responses during inflammation. Plays an essential role in the regeneration of epithelial cells to maintain barrier function after injury and for the prevention of further tissue damage. Unlike most of the cytokines, has no effect on immune cells. Signals through a heterodimeric receptor composed of two subunits, the specific receptor IL22RA1 which is present on non-immune cells in many organs and the shared subunit IL10RB. Ligation of IL22RA1 with IL22 induces activation of the tyrosine kinases JAK1 and TYK2, which in turn activates STAT3. In turn, promotes cell survival and proliferation through STAT3, ERK1/2 and PI3K/AKT pathways. Promotes phosphorylation of GSK3B at 'Ser-9' and CTTN. Promotes epithelial cell spreading. The chain is Interleukin-22 (Il22) from Mus musculus (Mouse).